The sequence spans 307 residues: Ribonuclease Z (307 aa).

Zn(2+) contacts are provided by His-62, His-64, Asp-66, His-67, His-139, Asp-210, and His-268. Asp-66 serves as the catalytic Proton acceptor.

Belongs to the RNase Z family. In terms of assembly, homodimer. It depends on Zn(2+) as a cofactor.

It carries out the reaction Endonucleolytic cleavage of RNA, removing extra 3' nucleotides from tRNA precursor, generating 3' termini of tRNAs. A 3'-hydroxy group is left at the tRNA terminus and a 5'-phosphoryl group is left at the trailer molecule.. Functionally, zinc phosphodiesterase, which displays some tRNA 3'-processing endonuclease activity. Probably involved in tRNA maturation, by removing a 3'-trailer from precursor tRNA. This Myxococcus xanthus (strain DK1622) protein is Ribonuclease Z.